We begin with the raw amino-acid sequence, 232 residues long: Ubiquinone biosynthesis O-methyltransferase (232 aa).

Residues R36, G55, D76, and L120 each contribute to the S-adenosyl-L-methionine site.

This sequence belongs to the methyltransferase superfamily. UbiG/COQ3 family.

It catalyses the reaction a 3-demethylubiquinol + S-adenosyl-L-methionine = a ubiquinol + S-adenosyl-L-homocysteine + H(+). The enzyme catalyses a 3-(all-trans-polyprenyl)benzene-1,2-diol + S-adenosyl-L-methionine = a 2-methoxy-6-(all-trans-polyprenyl)phenol + S-adenosyl-L-homocysteine + H(+). Its pathway is cofactor biosynthesis; ubiquinone biosynthesis. Functionally, O-methyltransferase that catalyzes the 2 O-methylation steps in the ubiquinone biosynthetic pathway. This is Ubiquinone biosynthesis O-methyltransferase from Pseudomonas fluorescens (strain SBW25).